Consider the following 490-residue polypeptide: Endoglucanase 13 (490 aa).

A signal peptide spans 1–26 (MSQLKNGSSQCLWTSICIVLIVMSMA). The N-linked (GlcNAc...) asparagine glycan is linked to Asn6. The active-site Nucleophile is Asp86. Residues His412, Asp464, and Glu473 contribute to the active site.

Belongs to the glycosyl hydrolase 9 (cellulase E) family.

It localises to the secreted. It carries out the reaction Endohydrolysis of (1-&gt;4)-beta-D-glucosidic linkages in cellulose, lichenin and cereal beta-D-glucans.. This is Endoglucanase 13 from Arabidopsis thaliana (Mouse-ear cress).